Consider the following 111-residue polypeptide: MGNFFSDLFNIKGATNPDSEHHQLRMNCRCGGSATYRCSVKVEHEYLEKFYVDYPFMKQYWHGTLCGSPDEYSFIACEDCIGENQNIFTHYPDGWGENPKFAYHYEKANLI.

Residue Gly-2 is the site of N-myristoyl glycine; by host attachment.

This is an uncharacterized protein from Acanthamoeba polyphaga mimivirus (APMV).